The primary structure comprises 347 residues: Aromatic amino acid aminotransferase (347 aa).

Lysine 214 carries the N6-(pyridoxal phosphate)lysine modification.

The protein belongs to the class-II pyridoxal-phosphate-dependent aminotransferase family. Homodimer. Requires pyridoxal 5'-phosphate as cofactor.

It carries out the reaction an aromatic L-alpha-amino acid + 2-oxoglutarate = an aromatic oxo-acid + L-glutamate. Functionally, aminotransferase that catalyzes the conversion of aromatic amino acids and 2-oxoglutarate into corresponding aromatic oxo acids and L-glutamate. The sequence is that of Aromatic amino acid aminotransferase from Mycobacteroides abscessus (strain ATCC 19977 / DSM 44196 / CCUG 20993 / CIP 104536 / JCM 13569 / NCTC 13031 / TMC 1543 / L948) (Mycobacterium abscessus).